The chain runs to 36 residues: Photosystem I reaction center subunit VIII (36 aa).

A helical transmembrane segment spans residues 8-28 (SILVPLVGLVFPAIAMASLFL).

This sequence belongs to the PsaI family.

The protein resides in the plastid. It is found in the chloroplast thylakoid membrane. Functionally, may help in the organization of the PsaL subunit. The protein is Photosystem I reaction center subunit VIII of Vitis vinifera (Grape).